Here is a 185-residue protein sequence, read N- to C-terminus: NEDD8-conjugating enzyme UBE2F (185 aa).

An interaction with uba3 region spans residues 1–29 (MLTLASKLKREEGVRAGRTPAGSNDAAHR). One can recognise a UBC core domain in the interval 32–185 (IRDRLLIKEV…VQDFIKNYAR (154 aa)). The active-site Glycyl thioester intermediate is the Cys-116.

This sequence belongs to the ubiquitin-conjugating enzyme family. UBE2F subfamily.

It carries out the reaction [E1 NEDD8-activating enzyme]-S-[NEDD8 protein]-yl-L-cysteine + [E2 NEDD8-conjugating enzyme]-L-cysteine = [E1 NEDD8-activating enzyme]-L-cysteine + [E2 NEDD8-conjugating enzyme]-S-[NEDD8-protein]-yl-L-cysteine.. It participates in protein modification; protein neddylation. Functionally, accepts the ubiquitin-like protein NEDD8 from the UBA3-NAE1 E1 complex and catalyzes its covalent attachment to other proteins. Together with the E3 ubiquitin ligase rnf7/rbx2, specifically neddylates cullin-5 (cul5). Does not neddylate cul1, cul2, cul3, cul4a or cul4b. This Danio rerio (Zebrafish) protein is NEDD8-conjugating enzyme UBE2F (ube2f).